A 189-amino-acid chain; its full sequence is Adenylate kinase (189 aa).

ATP is bound at residue 11 to 16 (GSGKGT). An NMP region spans residues 31-60 (STGDVLRAEIKNGTELGKTAKGYIDQGQLI). Residues threonine 32, arginine 37, 58 to 60 (QLI), 86 to 89 (GFPR), and glutamine 93 contribute to the AMP site. The LID stretch occupies residues 127–137 (KRGKDSGRADD). Arginine 128 is an ATP binding site. 2 residues coordinate AMP: arginine 134 and arginine 145. Glycine 173 provides a ligand contact to ATP.

It belongs to the adenylate kinase family. As to quaternary structure, monomer.

It is found in the cytoplasm. The enzyme catalyses AMP + ATP = 2 ADP. It functions in the pathway purine metabolism; AMP biosynthesis via salvage pathway; AMP from ADP: step 1/1. In terms of biological role, catalyzes the reversible transfer of the terminal phosphate group between ATP and AMP. Plays an important role in cellular energy homeostasis and in adenine nucleotide metabolism. The polypeptide is Adenylate kinase (Bacteroides thetaiotaomicron (strain ATCC 29148 / DSM 2079 / JCM 5827 / CCUG 10774 / NCTC 10582 / VPI-5482 / E50)).